A 197-amino-acid polypeptide reads, in one-letter code: Probable GTP-binding protein EngB (197 aa).

Positions 22-197 (TGVEVAFAGR…FKEKLDTWYQ (176 aa)) constitute an EngB-type G domain. GTP is bound by residues 30-37 (GRSNAGKS), 57-61 (GRTQL), 75-78 (DLPG), 142-145 (TKAD), and 177-179 (FSS). Residues Ser-37 and Thr-59 each coordinate Mg(2+).

It belongs to the TRAFAC class TrmE-Era-EngA-EngB-Septin-like GTPase superfamily. EngB GTPase family. Mg(2+) is required as a cofactor.

Functionally, necessary for normal cell division and for the maintenance of normal septation. This chain is Probable GTP-binding protein EngB, found in Francisella tularensis subsp. tularensis (strain FSC 198).